A 237-amino-acid polypeptide reads, in one-letter code: Phosphoribosylaminoimidazole-succinocarboxamide synthase (237 aa).

The protein belongs to the SAICAR synthetase family.

It carries out the reaction 5-amino-1-(5-phospho-D-ribosyl)imidazole-4-carboxylate + L-aspartate + ATP = (2S)-2-[5-amino-1-(5-phospho-beta-D-ribosyl)imidazole-4-carboxamido]succinate + ADP + phosphate + 2 H(+). It functions in the pathway purine metabolism; IMP biosynthesis via de novo pathway; 5-amino-1-(5-phospho-D-ribosyl)imidazole-4-carboxamide from 5-amino-1-(5-phospho-D-ribosyl)imidazole-4-carboxylate: step 1/2. The sequence is that of Phosphoribosylaminoimidazole-succinocarboxamide synthase from Erwinia tasmaniensis (strain DSM 17950 / CFBP 7177 / CIP 109463 / NCPPB 4357 / Et1/99).